A 207-amino-acid chain; its full sequence is ATP-dependent Clp protease proteolytic subunit (207 aa).

Residue S111 is the Nucleophile of the active site. The active site involves H136.

This sequence belongs to the peptidase S14 family. In terms of assembly, fourteen ClpP subunits assemble into 2 heptameric rings which stack back to back to give a disk-like structure with a central cavity, resembling the structure of eukaryotic proteasomes.

The protein localises to the cytoplasm. The catalysed reaction is Hydrolysis of proteins to small peptides in the presence of ATP and magnesium. alpha-casein is the usual test substrate. In the absence of ATP, only oligopeptides shorter than five residues are hydrolyzed (such as succinyl-Leu-Tyr-|-NHMec, and Leu-Tyr-Leu-|-Tyr-Trp, in which cleavage of the -Tyr-|-Leu- and -Tyr-|-Trp bonds also occurs).. Its function is as follows. Cleaves peptides in various proteins in a process that requires ATP hydrolysis. Has a chymotrypsin-like activity. Plays a major role in the degradation of misfolded proteins. This Proteus mirabilis (strain HI4320) protein is ATP-dependent Clp protease proteolytic subunit.